Reading from the N-terminus, the 292-residue chain is MKILVPATSANLGPGFDCLGLSLKLFNETQIQKSGVFSISIGGEGSDNIFLKKNNIFVNIFYEIYEKLSGKKDNFRFIFQNNIPLSRGLGSSSAVIVGAIASAYYMSGFKVEKECILDEALIYENHPDNIAPATLGGFVCSLVEKNKVYSIKKEIDKDLAAVVVIPNLAMSTEQSRQALAKNLSFNDAVFNLSHASFLTACFLEKKYEFLKFASQDKLHEINRMKNLPELFEVQKFALENKALMSTLSGSGSSFFSLAFKDDALALAKKIQTKFKDFRVQYLEFDDNGFEIC.

84 to 94 (PLSRGLGSSSA) is an ATP binding site.

It belongs to the GHMP kinase family. Homoserine kinase subfamily.

It localises to the cytoplasm. The enzyme catalyses L-homoserine + ATP = O-phospho-L-homoserine + ADP + H(+). The protein operates within amino-acid biosynthesis; L-threonine biosynthesis; L-threonine from L-aspartate: step 4/5. Its function is as follows. Catalyzes the ATP-dependent phosphorylation of L-homoserine to L-homoserine phosphate. This chain is Homoserine kinase, found in Campylobacter jejuni subsp. jejuni serotype O:2 (strain ATCC 700819 / NCTC 11168).